Reading from the N-terminus, the 319-residue chain is Ankyrin repeat domain-containing protein 1 (319 aa).

Residues 61-89 (KTEKQREAELKKKKLEQRSKLENLEDLEI) adopt a coiled-coil conformation. 5 ANK repeats span residues 152 to 181 (YKRTALHRACLEGHLAIVEKLIEAGAQIEF), 185 to 214 (LESTAIHWASRGGSLDVLKLLLNKGAKISA), 218 to 247 (LLSTPLHVAVRTGHYECAEHLIACEADLNA), 251 to 280 (EGDTPLHDAVRLNRYKMIRLLITYGADLNV), and 284 to 315 (AGKTPMDLVLHWQNGTKAIFDSLKENSYKASR).

In terms of assembly, interacts with TTN/titin and YBX1.

It is found in the nucleus. May play an important role in endothelial cell activation. May act as a nuclear transcription factor that negatively regulates the expression of cardiac genes. This is Ankyrin repeat domain-containing protein 1 (ANKRD1) from Bos taurus (Bovine).